A 201-amino-acid polypeptide reads, in one-letter code: Glutathione peroxidase 1, mitochondrial (201 aa).

Residues 1-27 constitute a mitochondrion transit peptide; sequence MLLTRKNVAVRPARAARRDVRAMSLLG. The active site involves U75. Residue U75 is a non-standard amino acid, selenocysteine.

Its subcellular location is the mitochondrion. It carries out the reaction 2 glutathione + H2O2 = glutathione disulfide + 2 H2O. In terms of biological role, may constitute a glutathione peroxidase-like protective system against oxidative stresses. Hydrogen peroxide, tert-butyl hydroperoxide and cumene, but not phosphatidylcholine hydroperoxide, can act as acceptors. The sequence is that of Glutathione peroxidase 1, mitochondrial from Chlamydomonas reinhardtii (Chlamydomonas smithii).